A 554-amino-acid polypeptide reads, in one-letter code: Malate synthase 1 (554 aa).

R177 (proton acceptor) is an active-site residue. Residue D457 is the Proton donor of the active site. An SKL peroxisome targeting motif motif is present at residues 552–554 (SKL).

It belongs to the malate synthase family. In terms of assembly, interacts with PEX9.

It is found in the peroxisome matrix. The catalysed reaction is glyoxylate + acetyl-CoA + H2O = (S)-malate + CoA + H(+). It participates in carbohydrate metabolism; glyoxylate cycle; (S)-malate from isocitrate: step 2/2. In terms of biological role, malate synthase which takes part in the glyoxylate cycle. MLS1 activity is essential for cells to grow on oleic acid as a sole carbon source. Two steps of the glyoxylate cycle take place in the cytosol, the splitting of isocitrate into succinate and glyoxylate, and the dehydrogenation of malate to oxaloacetate. However, the formation of malate from glyoxylate and acetyl-CoA undertaken MLS1, occurs in the peroxisomes when cells are grown on oleic acid. The source of acetyl-CoA being either peroxisomal when breaking down fatty acids, or cytosolic when extra-cellular two-carbon substrates are used, therefore, although not strictly essential, the peroxisomal localization of MLS1 appears to be advantageous for cells growing on oleic acid, in that acetyl-CoA production and utilization are thereby intimately compartmentalized together to increase efficiency. The protein is Malate synthase 1 of Saccharomyces cerevisiae (strain YJM789) (Baker's yeast).